The primary structure comprises 784 residues: Toll-like receptor 2 (784 aa).

Positions 1-20 (MPRALWTAWVWAVISVFTEG) are cleaved as a signal peptide. Topologically, residues 21-587 (ASDQASSLSC…ARLSLSECHR (567 aa)) are extracellular. A disulfide bridge connects residues C30 and C36. LRR repeat units lie at residues 54–77 (VKSL…RCVN), 78–101 (LKTL…HLRN), 102–125 (LEYL…SLYV), 126–150 (LKFL…HLPN), 151–175 (LRTL…GLTF), 176–199 (LEEL…SIQN), 200–223 (ISHL…IVSS), 224–250 (LDYL…INTS), 251–278 (VKKL…YVSG), 279–308 (ILEV…YLGN), 309–337 (VETL…LTGK), 338–361 (VKRV…HLKS), 362–388 (LEYL…AWPV), 389–414 (LQTL…TLKN), 415–437 (LNNL…WPGK), 438–457 (MKQL…CLPQ), 458–478 (TLEI…ILPQ), 479–500 (LKEL…FLPV), and 501–524 (LSVM…SFPQ). N114 carries an N-linked (GlcNAc...) asparagine glycan. N-linked (GlcNAc...) asparagine glycosylation is present at N199. N248 carries N-linked (GlcNAc...) asparagine glycosylation. The cysteines at positions 353 and 382 are disulfide-linked. Residues C432 and C454 are joined by a disulfide bond. N442 carries N-linked (GlcNAc...) asparagine glycosylation. In terms of domain architecture, LRRCT spans 525-579 (LKALEAGGNNFICSCDFLSFAQGQQALARVLVDWPDGYRCDAPSHVRGQRVQDAR). Residues 588-608 (AAVVSAVCCALFLLLLLTGVL) traverse the membrane as a helical segment. Topologically, residues 609–784 (CHRFHGLWYM…WLNLRAAIRS (176 aa)) are cytoplasmic. One can recognise a TIR domain in the interval 639 to 782 (LCYDAFVSYS…AFWLNLRAAI (144 aa)). Residue K754 forms a Glycyl lysine isopeptide (Lys-Gly) (interchain with G-Cter in ubiquitin) linkage. The ATG16L1-binding motif motif lies at 761-778 (YLEWPTDETHREAFWLNL).

The protein belongs to the Toll-like receptor family. Interacts with LY96, TLR1 and TLR6 (via extracellular domain). TLR2 seems to exist in heterodimers with either TLR1 or TLR6 before stimulation by the ligand. The heterodimers form bigger oligomers in response to their corresponding ligands as well as further heterotypic associations with other receptors such as CD14 and/or CD36. Binds MYD88 (via TIR domain). Interacts with TICAM1. Interacts with CNPY3. Interacts with ATG16L1. Interacts with PPP1R11. Interacts with TICAM2. Interacts with TIRAP. Ubiquitinated at Lys-754 by PPP1R11, leading to its degradation. Deubiquitinated by USP2. In terms of processing, glycosylation of Asn-442 is critical for secretion of the N-terminal ectodomain of TLR2.

It localises to the membrane. It is found in the cytoplasmic vesicle. The protein resides in the phagosome membrane. Its subcellular location is the membrane raft. Functionally, cooperates with LY96 to mediate the innate immune response to bacterial lipoproteins and other microbial cell wall components. Cooperates with TLR1 or TLR6 to mediate the innate immune response to bacterial lipoproteins or lipopeptides. Acts via MYD88 and TRAF6, leading to NF-kappa-B activation, cytokine secretion and the inflammatory response. May also promote apoptosis in response to lipoproteins. Forms activation clusters composed of several receptors depending on the ligand, these clusters trigger signaling from the cell surface and subsequently are targeted to the Golgi in a lipid-raft dependent pathway. Forms the cluster TLR2:TLR6:CD14:CD36 in response to diacylated lipopeptides and TLR2:TLR1:CD14 in response to triacylated lipopeptides. This is Toll-like receptor 2 (TLR2) from Ovis aries (Sheep).